The primary structure comprises 160 residues: Cytochrome b6-f complex subunit 4 (160 aa).

3 helical membrane-spanning segments follow: residues 36–56, 95–115, and 128–148; these read LLYI…GLAV, LLGI…PFIE, and VAMT…IGAA.

The protein belongs to the cytochrome b family. PetD subfamily. The 4 large subunits of the cytochrome b6-f complex are cytochrome b6, subunit IV (17 kDa polypeptide, PetD), cytochrome f and the Rieske protein, while the 4 small subunits are PetG, PetL, PetM and PetN. The complex functions as a dimer.

The protein localises to the cellular thylakoid membrane. In terms of biological role, component of the cytochrome b6-f complex, which mediates electron transfer between photosystem II (PSII) and photosystem I (PSI), cyclic electron flow around PSI, and state transitions. The sequence is that of Cytochrome b6-f complex subunit 4 from Synechococcus sp. (strain CC9902).